A 43-amino-acid polypeptide reads, in one-letter code: Large ribosomal subunit protein bL32 (43 aa).

This sequence belongs to the bacterial ribosomal protein bL32 family.

The polypeptide is Large ribosomal subunit protein bL32 (rpmF) (Carsonella ruddii (strain PV)).